A 45-amino-acid chain; its full sequence is MLMSLFLAKLPAAYALFDPIVDILPIIPLFFLLLAFVWQAAIGFK.

The propeptide occupies Met1 to Ala8. Residues Ile23–Gly43 traverse the membrane as a helical segment.

Belongs to the PsbK family. As to quaternary structure, PSII is composed of 1 copy each of membrane proteins PsbA, PsbB, PsbC, PsbD, PsbE, PsbF, PsbH, PsbI, PsbJ, PsbK, PsbL, PsbM, PsbT, PsbX, PsbY, PsbZ, Psb30/Ycf12, at least 3 peripheral proteins of the oxygen-evolving complex and a large number of cofactors. It forms dimeric complexes.

The protein localises to the plastid. It is found in the cyanelle thylakoid membrane. One of the components of the core complex of photosystem II (PSII). PSII is a light-driven water:plastoquinone oxidoreductase that uses light energy to abstract electrons from H(2)O, generating O(2) and a proton gradient subsequently used for ATP formation. It consists of a core antenna complex that captures photons, and an electron transfer chain that converts photonic excitation into a charge separation. This chain is Photosystem II reaction center protein K, found in Cyanophora paradoxa.